The chain runs to 408 residues: Argininosuccinate synthase (408 aa).

ATP-binding positions include 16–24 (AYSGGLDTS) and A44. 2 residues coordinate L-citrulline: Y96 and S101. Residue G126 coordinates ATP. Residues T128, N132, and D133 each coordinate L-aspartate. Position 132 (N132) interacts with L-citrulline. Residues R136, S185, S194, E270, and Y282 each coordinate L-citrulline.

The protein belongs to the argininosuccinate synthase family. Type 1 subfamily. As to quaternary structure, homotetramer.

Its subcellular location is the cytoplasm. The enzyme catalyses L-citrulline + L-aspartate + ATP = 2-(N(omega)-L-arginino)succinate + AMP + diphosphate + H(+). It functions in the pathway amino-acid biosynthesis; L-arginine biosynthesis; L-arginine from L-ornithine and carbamoyl phosphate: step 2/3. This chain is Argininosuccinate synthase, found in Shewanella woodyi (strain ATCC 51908 / MS32).